The primary structure comprises 141 residues: Hemoglobin subunit alpha-1/2 (141 aa).

The 141-residue stretch at V1–R141 folds into the Globin domain. S3 is modified (phosphoserine). N6-succinyllysine is present on residues K7 and K11. At K16 the chain carries N6-acetyllysine; alternate. N6-succinyllysine; alternate is present on K16. Y24 carries the phosphotyrosine modification. S35 is modified (phosphoserine). K40 is modified (N6-succinyllysine). Residue S49 is modified to Phosphoserine. Residue H58 coordinates O2. H87 is a binding site for heme b. S102 is modified (phosphoserine). T108 carries the phosphothreonine modification. S124 and S131 each carry phosphoserine. Phosphothreonine occurs at positions 134 and 137. S138 carries the phosphoserine modification.

It belongs to the globin family. In terms of assembly, heterotetramer of two alpha chains and two beta chains. Red blood cells.

Functionally, involved in oxygen transport from the lung to the various peripheral tissues. The polypeptide is Hemoglobin subunit alpha-1/2 (Mandrillus sphinx (Mandrill)).